Consider the following 189-residue polypeptide: GTP cyclohydrolase 1 (189 aa).

Zn(2+) contacts are provided by C78, H81, and C150.

Belongs to the GTP cyclohydrolase I family. Homomer.

The catalysed reaction is GTP + H2O = 7,8-dihydroneopterin 3'-triphosphate + formate + H(+). It functions in the pathway cofactor biosynthesis; 7,8-dihydroneopterin triphosphate biosynthesis; 7,8-dihydroneopterin triphosphate from GTP: step 1/1. This is GTP cyclohydrolase 1 from Listeria monocytogenes serotype 4a (strain HCC23).